The sequence spans 278 residues: ATP synthase subunit delta (278 aa).

This sequence belongs to the ATPase delta chain family. In terms of assembly, F-type ATPases have 2 components, F(1) - the catalytic core - and F(0) - the membrane proton channel. F(1) has five subunits: alpha(3), beta(3), gamma(1), delta(1), epsilon(1). F(0) has three main subunits: a(1), b(2) and c(10-14). The alpha and beta chains form an alternating ring which encloses part of the gamma chain. F(1) is attached to F(0) by a central stalk formed by the gamma and epsilon chains, while a peripheral stalk is formed by the delta and b chains.

The protein resides in the cell membrane. Functionally, f(1)F(0) ATP synthase produces ATP from ADP in the presence of a proton or sodium gradient. F-type ATPases consist of two structural domains, F(1) containing the extramembraneous catalytic core and F(0) containing the membrane proton channel, linked together by a central stalk and a peripheral stalk. During catalysis, ATP synthesis in the catalytic domain of F(1) is coupled via a rotary mechanism of the central stalk subunits to proton translocation. In terms of biological role, this protein is part of the stalk that links CF(0) to CF(1). It either transmits conformational changes from CF(0) to CF(1) or is implicated in proton conduction. The protein is ATP synthase subunit delta of Bifidobacterium longum subsp. infantis (strain ATCC 15697 / DSM 20088 / JCM 1222 / NCTC 11817 / S12).